The primary structure comprises 187 residues: Protein GrpE (187 aa).

Positions 1–11 are enriched in basic and acidic residues; the sequence is MTDSSNEHETE. Positions 1 to 21 are disordered; it reads MTDSSNEHETENPSLPIPDNE.

The protein belongs to the GrpE family. As to quaternary structure, homodimer.

The protein resides in the cytoplasm. Functionally, participates actively in the response to hyperosmotic and heat shock by preventing the aggregation of stress-denatured proteins, in association with DnaK and GrpE. It is the nucleotide exchange factor for DnaK and may function as a thermosensor. Unfolded proteins bind initially to DnaJ; upon interaction with the DnaJ-bound protein, DnaK hydrolyzes its bound ATP, resulting in the formation of a stable complex. GrpE releases ADP from DnaK; ATP binding to DnaK triggers the release of the substrate protein, thus completing the reaction cycle. Several rounds of ATP-dependent interactions between DnaJ, DnaK and GrpE are required for fully efficient folding. The polypeptide is Protein GrpE (Chlamydia caviae (strain ATCC VR-813 / DSM 19441 / 03DC25 / GPIC) (Chlamydophila caviae)).